The chain runs to 92 residues: Large ribosomal subunit protein bL25 (92 aa).

The protein belongs to the bacterial ribosomal protein bL25 family. Part of the 50S ribosomal subunit; part of the 5S rRNA/L5/L18/L25 subcomplex. Contacts the 5S rRNA. Binds to the 5S rRNA independently of L5 and L18.

This is one of the proteins that binds to the 5S RNA in the ribosome where it forms part of the central protuberance. This Vibrio cholerae serotype O1 (strain ATCC 39541 / Classical Ogawa 395 / O395) protein is Large ribosomal subunit protein bL25.